The primary structure comprises 301 residues: MDSTMTNYMGQENLPPALKLINDKSYQYSTHKHNIETSNDGTLHSYTIVLSREPLESPTSYNKYQKNVEPVQKENQKPKDLNKMTAGPHIAVKNSSGLVSQISSTTSSERKRRTLARPSSSSESDLKVGNIQQSNQYFTLPSVMKPSALSTEDPKKVIVQSNTSSSSMSDASSKKSLPTYTYLSGHTTGSARYVTMVNVKFLLLHCDVLQRRAQSMFTDEFPSDCRLEEVVINFHQLCCRQLLDQNFNPRLSYCIGELNYSDSKPVSANDMSKTLAQLATTQSIAQLSIIVDVTEKNMKLK.

Disordered stretches follow at residues 56–126 and 149–173; these read ESPT…ESDL and LSTEDPKKVIVQSNTSSSSMSDASS. Over residues 71-82 the composition is skewed to basic and acidic residues; the sequence is VQKENQKPKDLN. A compositionally biased stretch (polar residues) spans 93-102; it reads KNSSGLVSQI. Residues 161–173 are compositionally biased toward low complexity; that stretch reads SNTSSSSMSDASS.

This is an uncharacterized protein from Caenorhabditis elegans.